Consider the following 720-residue polypeptide: Polyribonucleotide nucleotidyltransferase (720 aa).

Mg(2+) contacts are provided by Asp487 and Asp493. One can recognise a KH domain in the interval 554 to 613; that stretch reads PRITTISIPKEKIREVIGTGGKVIREICEQTGAKIDIDDDGTIKVASVDADAAQRAIDWI. An S1 motif domain is found at 623–691; that stretch reads GVIYNGKVVK…DRGKVKLSMK (69 aa). A disordered region spans residues 695–720; that stretch reads QTTGEDISAQLEAERAASKRERHHED. Basic and acidic residues predominate over residues 706–720; it reads EAERAASKRERHHED.

It belongs to the polyribonucleotide nucleotidyltransferase family. Mg(2+) serves as cofactor.

Its subcellular location is the cytoplasm. The enzyme catalyses RNA(n+1) + phosphate = RNA(n) + a ribonucleoside 5'-diphosphate. Functionally, involved in mRNA degradation. Catalyzes the phosphorolysis of single-stranded polyribonucleotides processively in the 3'- to 5'-direction. This Paramagnetospirillum magneticum (strain ATCC 700264 / AMB-1) (Magnetospirillum magneticum) protein is Polyribonucleotide nucleotidyltransferase.